Reading from the N-terminus, the 351-residue chain is Molybdenum import ATP-binding protein ModC (351 aa).

Residues 1-229 (MLKINVKKQL…PLFLPWKLED (229 aa)) form the ABC transporter domain. 31-38 (GLSGSGKT) contacts ATP. Residues 289-351 (KTSIRNILHG…FAQIKAVSVL (63 aa)) enclose the Mop domain.

The protein belongs to the ABC transporter superfamily. Molybdate importer (TC 3.A.1.8) family. In terms of assembly, the complex is composed of two ATP-binding proteins (ModC), two transmembrane proteins (ModB) and a solute-binding protein (ModA).

Its subcellular location is the cell inner membrane. The enzyme catalyses molybdate(out) + ATP + H2O = molybdate(in) + ADP + phosphate + H(+). Its function is as follows. Part of the ABC transporter complex ModABC involved in molybdenum import. Responsible for energy coupling to the transport system. In Pasteurella multocida (strain Pm70), this protein is Molybdenum import ATP-binding protein ModC.